A 154-amino-acid polypeptide reads, in one-letter code: Spermatogenesis-associated protein 19, mitochondrial (154 aa).

A mitochondrion-targeting transit peptide spans 1–24; it reads MIITTWIMYILARKSIGLPFPPRV. Residues S26 and S116 each carry the phosphoserine modification.

Expressed in the testis.

It is found in the mitochondrion outer membrane. The protein localises to the mitochondrion. Its subcellular location is the cell projection. The protein resides in the cilium. It localises to the flagellum. Functionally, essential for sperm motility and male fertility. Plays an important role in sperm motility by regulating the organization and function of the mitochondria and is also required for correct sperm midpiece assembly. The polypeptide is Spermatogenesis-associated protein 19, mitochondrial (Spata19) (Rattus norvegicus (Rat)).